The sequence spans 79 residues: Immunity protein CdiI (79 aa).

The next 2 membrane-spanning stretches (helical) occupy residues 12–32 (IIFF…IGLI) and 51–71 (VVLF…LGLW).

Probably interacts with cognate toxin CdiA.

The protein localises to the cell inner membrane. Functionally, immunity protein component of a toxin-immunity protein module, which functions as a cellular contact-dependent growth inhibition (CDI) system. CDI modules allow bacteria to communicate with and inhibit the growth of closely related neighboring bacteria in a contact-dependent fashion. Protects cells against CdiA from the same strain, its cognate toxin protein. Growth inhibition is reversible upon induction of this protein, occurring about 2.5 hours after induction, and requires an energy source. Does not protect against non-cognate CdiA from E.coli strain 563 / UPEC, D.dadantii strain 3937 or Y.pestis strain CO92. The polypeptide is Immunity protein CdiI (Escherichia coli).